Reading from the N-terminus, the 405-residue chain is L-rhamnonate dehydratase (405 aa).

Residues H33 and R59 each contribute to the substrate site. 3 residues coordinate Mg(2+): D226, E252, and E280. H329 serves as the catalytic Proton acceptor. E349 lines the substrate pocket.

This sequence belongs to the mandelate racemase/muconate lactonizing enzyme family. RhamD subfamily. As to quaternary structure, homooctamer; tetramer of dimers. The cofactor is Mg(2+).

The enzyme catalyses L-rhamnonate = 2-dehydro-3-deoxy-L-rhamnonate + H2O. Catalyzes the dehydration of L-rhamnonate to 2-keto-3-deoxy-L-rhamnonate (KDR). In Salmonella typhi, this protein is L-rhamnonate dehydratase.